The following is a 772-amino-acid chain: Major capsid protein (772 aa).

The disordered stretch occupies residues 593 to 772; sequence GIAPGRSNAG…AAQADRAEGQ (180 aa). Residues 654–664 show a composition bias toward gly residues; the sequence is NRGGEAGGVTG. A compositionally biased stretch (pro residues) spans 716-742; that stretch reads PLPPAPGAAPPPPPGPPNGPPAGPPPS. The span at 743–766 shows a compositional bias: low complexity; it reads DDGSSNPAAPVPTAIHAPPAAAQA.

It belongs to the totivirus major capsid protein family.

It is found in the virion. Capsid protein self-assembles to form an icosahedral capsid with a T=2 symmetry, 40 nm in diameter, and consisting of 60 capsid proteins asymmetric dimers. The capsid encapsulates the genomic dsRNA and the polymerase and remains intact following cell entry to protect the dsRNA from degradation and to prevent unfavorable antiviral responses in the host cell during all the replication cycle of the virus. Nascent transcripts are transcribed within the structural confines of the virion and are extruded into the cytoplasm. Its function is as follows. Binds and removes 5' cap structures from cellular mRNA. This Helminthosporium victoriae virus-190S (Hv190SV) protein is Major capsid protein.